We begin with the raw amino-acid sequence, 468 residues long: Elongation factor 1-alpha (468 aa).

Residues 6–244 (KPHINIVVIG…DNIPLPARPS (239 aa)) form the tr-type G domain. The interval 15–22 (GHVDSGKS) is G1. GTP is bound at residue 15–22 (GHVDSGKS). The tract at residues 71–75 (GITID) is G2. Residues 92–95 (DAPG) form a G3 region. Residues 92-96 (DAPGH) and 154-157 (NKID) each bind GTP. Residues 154–157 (NKID) form a G4 region. The interval 195-197 (SGW) is G5. 2 positions are modified to 5-glutamyl glycerylphosphorylethanolamine: E303 and E376.

This sequence belongs to the TRAFAC class translation factor GTPase superfamily. Classic translation factor GTPase family. EF-Tu/EF-1A subfamily.

The protein resides in the cytoplasm. Its function is as follows. This protein promotes the GTP-dependent binding of aminoacyl-tRNA to the A-site of ribosomes during protein biosynthesis. The protein is Elongation factor 1-alpha of Hydra vulgaris (Hydra).